The chain runs to 387 residues: 3-ketoacyl-CoA thiolase (387 aa).

Cysteine 91 (acyl-thioester intermediate) is an active-site residue. Residues histidine 343 and cysteine 373 each act as proton acceptor in the active site.

This sequence belongs to the thiolase-like superfamily. Thiolase family. Heterotetramer of two alpha chains (FadB) and two beta chains (FadA).

Its subcellular location is the cytoplasm. The catalysed reaction is an acyl-CoA + acetyl-CoA = a 3-oxoacyl-CoA + CoA. Its pathway is lipid metabolism; fatty acid beta-oxidation. Functionally, catalyzes the final step of fatty acid oxidation in which acetyl-CoA is released and the CoA ester of a fatty acid two carbons shorter is formed. The chain is 3-ketoacyl-CoA thiolase from Aeromonas salmonicida (strain A449).